A 247-amino-acid polypeptide reads, in one-letter code: Syntaxin-like protein fsv1 (247 aa).

Positions 27 to 94 (NPDEEIESSL…FEKQRRASSI (68 aa)) form a coiled coil. The tract at residues 88-130 (QRRASSIPADGTSAFSANPQVASTNNKLTPLPSLQKTTSSSEG) is disordered. A compositionally biased stretch (polar residues) spans 100–130 (SAFSANPQVASTNNKLTPLPSLQKTTSSSEG). A t-SNARE coiled-coil homology domain is found at 159-221 (QQMLNEQEES…DHAKNRLNKV (63 aa)).

The protein resides in the golgi apparatus membrane. It is found in the prevacuolar compartment membrane. Involved in vesicle-mediated protein transport between the Golgi and the vacuole. The sequence is that of Syntaxin-like protein fsv1 (fsv1) from Schizosaccharomyces pombe (strain 972 / ATCC 24843) (Fission yeast).